We begin with the raw amino-acid sequence, 57 residues long: Mambaquaretin-6 (57 aa).

In terms of domain architecture, BPTI/Kunitz inhibitor spans 5-55 (CNLPVKPGPCSGFFSAFYYSQKTNKCHSFTYGGCRGPGNRFRTIEECRRTC). Intrachain disulfides connect cysteine 5–cysteine 55, cysteine 14–cysteine 38, and cysteine 30–cysteine 51.

The protein belongs to the venom Kunitz-type family. In terms of tissue distribution, expressed by the venom gland.

It is found in the secreted. In terms of biological role, interacts with vasopressin V2 receptor (V2R/AVPR2), probably in a selective manner. Inhibits vasopressin binding human V2R in the nanomolar range (Ki=21.5 nM), and also moderately inhibits vasopressin-induced cAMP production (IC(50)=574 nM). In vivo, intraperitoneal injection of this protein into rats increases diuresis by 2-fold, without any loss of electrolytes. The polypeptide is Mambaquaretin-6 (Dendroaspis viridis (Western green mamba)).